The primary structure comprises 276 residues: Bis(5'-nucleosyl)-tetraphosphatase, symmetrical (276 aa).

It belongs to the Ap4A hydrolase family.

It catalyses the reaction P(1),P(4)-bis(5'-adenosyl) tetraphosphate + H2O = 2 ADP + 2 H(+). In terms of biological role, hydrolyzes diadenosine 5',5'''-P1,P4-tetraphosphate to yield ADP. This is Bis(5'-nucleosyl)-tetraphosphatase, symmetrical from Mannheimia succiniciproducens (strain KCTC 0769BP / MBEL55E).